The chain runs to 319 residues: Ferrochelatase (319 aa).

Fe cation is bound by residues His193 and Glu274.

Belongs to the ferrochelatase family.

Its subcellular location is the cytoplasm. The catalysed reaction is heme b + 2 H(+) = protoporphyrin IX + Fe(2+). It participates in porphyrin-containing compound metabolism; protoheme biosynthesis; protoheme from protoporphyrin-IX: step 1/1. Functionally, catalyzes the ferrous insertion into protoporphyrin IX. This is Ferrochelatase from Actinobacillus pleuropneumoniae serotype 5b (strain L20).